A 536-amino-acid polypeptide reads, in one-letter code: CTP synthase (536 aa).

An amidoligase domain region spans residues 1–268; the sequence is MSTKYVFVTG…DNLVCEKLHL (268 aa). Ser-14 contacts CTP. Ser-14 contributes to the UTP binding site. 15 to 20 serves as a coordination point for ATP; it reads ALGKGI. Tyr-55 is a binding site for L-glutamine. An ATP-binding site is contributed by Asp-72. Positions 72 and 142 each coordinate Mg(2+). CTP is bound by residues 149-151, 189-194, and Lys-225; these read DIE and KTKPTQ. Residues 189-194 and Lys-225 each bind UTP; that span reads KTKPTQ. The 243-residue stretch at 293-535 folds into the Glutamine amidotransferase type-1 domain; the sequence is KIALVGKYVE…IKAALEENKS (243 aa). L-glutamine is bound at residue Gly-355. Cys-382 serves as the catalytic Nucleophile; for glutamine hydrolysis. L-glutamine-binding positions include 383-386, Glu-406, and Arg-463; that span reads LGMQ. Residues His-508 and Glu-510 contribute to the active site.

The protein belongs to the CTP synthase family. Homotetramer.

The catalysed reaction is UTP + L-glutamine + ATP + H2O = CTP + L-glutamate + ADP + phosphate + 2 H(+). It carries out the reaction L-glutamine + H2O = L-glutamate + NH4(+). The enzyme catalyses UTP + NH4(+) + ATP = CTP + ADP + phosphate + 2 H(+). Its pathway is pyrimidine metabolism; CTP biosynthesis via de novo pathway; CTP from UDP: step 2/2. Allosterically activated by GTP, when glutamine is the substrate; GTP has no effect on the reaction when ammonia is the substrate. The allosteric effector GTP functions by stabilizing the protein conformation that binds the tetrahedral intermediate(s) formed during glutamine hydrolysis. Inhibited by the product CTP, via allosteric rather than competitive inhibition. Functionally, catalyzes the ATP-dependent amination of UTP to CTP with either L-glutamine or ammonia as the source of nitrogen. Regulates intracellular CTP levels through interactions with the four ribonucleotide triphosphates. In Clostridium beijerinckii (strain ATCC 51743 / NCIMB 8052) (Clostridium acetobutylicum), this protein is CTP synthase.